Consider the following 190-residue polypeptide: Xanthine phosphoribosyltransferase (190 aa).

2 residues coordinate xanthine: Leu20 and Asn27. Residue 128-132 (ANGEA) coordinates 5-phospho-alpha-D-ribose 1-diphosphate. Lys156 contributes to the xanthine binding site.

It belongs to the purine/pyrimidine phosphoribosyltransferase family. Xpt subfamily. As to quaternary structure, homodimer.

It localises to the cytoplasm. It carries out the reaction XMP + diphosphate = xanthine + 5-phospho-alpha-D-ribose 1-diphosphate. Its pathway is purine metabolism; XMP biosynthesis via salvage pathway; XMP from xanthine: step 1/1. In terms of biological role, converts the preformed base xanthine, a product of nucleic acid breakdown, to xanthosine 5'-monophosphate (XMP), so it can be reused for RNA or DNA synthesis. This is Xanthine phosphoribosyltransferase from Clostridium botulinum (strain Eklund 17B / Type B).